The chain runs to 762 residues: 5-methyltetrahydropteroyltriglutamate--homocysteine methyltransferase (762 aa).

Residues 17-20 (REWK) and lysine 111 contribute to the 5-methyltetrahydropteroyltri-L-glutamate site. L-homocysteine is bound by residues 435–437 (IGS) and glutamate 488. Residues 435–437 (IGS) and glutamate 488 contribute to the L-methionine site. 5-methyltetrahydropteroyltri-L-glutamate contacts are provided by residues 519–520 (RC) and tryptophan 565. An L-homocysteine-binding site is contributed by aspartate 603. L-methionine is bound at residue aspartate 603. Glutamate 609 contributes to the 5-methyltetrahydropteroyltri-L-glutamate binding site. Zn(2+) contacts are provided by histidine 645, cysteine 647, and glutamate 669. The active-site Proton donor is histidine 698. Cysteine 730 is a binding site for Zn(2+).

Belongs to the vitamin-B12 independent methionine synthase family. Zn(2+) is required as a cofactor.

It carries out the reaction 5-methyltetrahydropteroyltri-L-glutamate + L-homocysteine = tetrahydropteroyltri-L-glutamate + L-methionine. Its pathway is amino-acid biosynthesis; L-methionine biosynthesis via de novo pathway; L-methionine from L-homocysteine (MetE route): step 1/1. In terms of biological role, catalyzes the transfer of a methyl group from 5-methyltetrahydrofolate to homocysteine resulting in methionine formation. In Bacillus mycoides (strain KBAB4) (Bacillus weihenstephanensis), this protein is 5-methyltetrahydropteroyltriglutamate--homocysteine methyltransferase.